Consider the following 162-residue polypeptide: Cyclic pyranopterin monophosphate synthase (162 aa).

Residues 75 to 77 and 115 to 116 each bind substrate; these read MCH and ME. The active site involves aspartate 130.

This sequence belongs to the MoaC family. Homohexamer; trimer of dimers.

The enzyme catalyses (8S)-3',8-cyclo-7,8-dihydroguanosine 5'-triphosphate = cyclic pyranopterin phosphate + diphosphate. It participates in cofactor biosynthesis; molybdopterin biosynthesis. Functionally, catalyzes the conversion of (8S)-3',8-cyclo-7,8-dihydroguanosine 5'-triphosphate to cyclic pyranopterin monophosphate (cPMP). The polypeptide is Cyclic pyranopterin monophosphate synthase (Geobacillus thermodenitrificans (strain NG80-2)).